Consider the following 300-residue polypeptide: Ribosomal protein L11 methyltransferase (300 aa).

The S-adenosyl-L-methionine site is built by Thr-152, Gly-173, Asp-195, and Asn-234.

It belongs to the methyltransferase superfamily. PrmA family.

It localises to the cytoplasm. It catalyses the reaction L-lysyl-[protein] + 3 S-adenosyl-L-methionine = N(6),N(6),N(6)-trimethyl-L-lysyl-[protein] + 3 S-adenosyl-L-homocysteine + 3 H(+). Its function is as follows. Methylates ribosomal protein L11. This Burkholderia pseudomallei (strain K96243) protein is Ribosomal protein L11 methyltransferase.